Here is a 217-residue protein sequence, read N- to C-terminus: Probable transaldolase (217 aa).

The active-site Schiff-base intermediate with substrate is the Lys-83.

It belongs to the transaldolase family. Type 3B subfamily.

It is found in the cytoplasm. The catalysed reaction is D-sedoheptulose 7-phosphate + D-glyceraldehyde 3-phosphate = D-erythrose 4-phosphate + beta-D-fructose 6-phosphate. It participates in carbohydrate degradation; pentose phosphate pathway; D-glyceraldehyde 3-phosphate and beta-D-fructose 6-phosphate from D-ribose 5-phosphate and D-xylulose 5-phosphate (non-oxidative stage): step 2/3. Functionally, transaldolase is important for the balance of metabolites in the pentose-phosphate pathway. The sequence is that of Probable transaldolase from Roseobacter denitrificans (strain ATCC 33942 / OCh 114) (Erythrobacter sp. (strain OCh 114)).